Consider the following 165-residue polypeptide: 2-C-methyl-D-erythritol 2,4-cyclodiphosphate synthase (165 aa).

Residues Asp-8 and His-10 each contribute to the a divalent metal cation site. Residues 8–10 (DVH) and 34–35 (HS) each bind 4-CDP-2-C-methyl-D-erythritol 2-phosphate. Residue His-42 coordinates a divalent metal cation. 4-CDP-2-C-methyl-D-erythritol 2-phosphate is bound by residues 56-58 (DIG), 61-65 (FPDTD), 132-135 (TTTE), Phe-139, and Arg-142.

This sequence belongs to the IspF family. As to quaternary structure, homotrimer. The cofactor is a divalent metal cation.

The catalysed reaction is 4-CDP-2-C-methyl-D-erythritol 2-phosphate = 2-C-methyl-D-erythritol 2,4-cyclic diphosphate + CMP. The protein operates within isoprenoid biosynthesis; isopentenyl diphosphate biosynthesis via DXP pathway; isopentenyl diphosphate from 1-deoxy-D-xylulose 5-phosphate: step 4/6. Involved in the biosynthesis of isopentenyl diphosphate (IPP) and dimethylallyl diphosphate (DMAPP), two major building blocks of isoprenoid compounds. Catalyzes the conversion of 4-diphosphocytidyl-2-C-methyl-D-erythritol 2-phosphate (CDP-ME2P) to 2-C-methyl-D-erythritol 2,4-cyclodiphosphate (ME-CPP) with a corresponding release of cytidine 5-monophosphate (CMP). The protein is 2-C-methyl-D-erythritol 2,4-cyclodiphosphate synthase of Halothermothrix orenii (strain H 168 / OCM 544 / DSM 9562).